The primary structure comprises 900 residues: Zinc finger protein 62 homolog (900 aa).

The interval 1–97 (MSHLKTSTED…EASEKSLHLS (97 aa)) is disordered. Residue K5 forms a Glycyl lysine isopeptide (Lys-Gly) (interchain with G-Cter in SUMO2) linkage. The span at 9–18 (EDEEPTEEYE) shows a compositional bias: acidic residues. Over residues 47–73 (SKVENQQKKPVENRMKEDKSSIREAIS) the composition is skewed to basic and acidic residues. Glycyl lysine isopeptide (Lys-Gly) (interchain with G-Cter in SUMO2) cross-links involve residues K48, K62, K65, K82, and K92. Basic and acidic residues predominate over residues 83–94 (TEQEGEASEKSL). 13 C2H2-type zinc fingers span residues 225-247 (CKCDECGKSFNYSSVLDQHKRIH), 253-275 (YECGECGKAFRNSSGLRVHKRIH), 281-303 (YECDICGKTFSNSSGLRVHKRIH), 309-331 (YECDECGKAFITCRTLLNHKSIH), 337-359 (YKCDECEKSFNYSSLLIQHKVIH), 365-387 (YECDECGKAFRNSSGLIVHKRIH), 393-415 (YKCDVCGKAFSYSSGLAVHKSIH), 421-443 (HECKECGKSFSYNSLLLQHRTIH), 449-471 (YVCDVCGKTFRNNAGLKVHRRLH), 477-499 (YKCDVCGKAYISRSSLKNHKGIH), 505-527 (YKCSYCEKSFNYSSALEQHKRIH), 533-555 (FGCDECGKAFRNNSGLKVHKRIH), and 561-583 (YKCEECGKAYISLSSLINHKSVH). K587 participates in a covalent cross-link: Glycyl lysine isopeptide (Lys-Gly) (interchain with G-Cter in SUMO2). 10 C2H2-type zinc fingers span residues 589 to 611 (FKCDECEKAFITYRTLTNHKKVH), 617 to 639 (YKCDVCEKSFNYTSLLSQHRRVH), 645 to 667 (YECDRCEKVFRNNSSLKVHKRIH), 673 to 695 (YECDVCGKAYISHSSLINHKSTH), 701 to 723 (HTCDECGKAFFSSRTLISHKRVH), 729 to 751 (FKCVECGKSFSYSSLLSQHKRIH), 757 to 779 (YVCDRCGKAFRNSSGLTVHKRIH), 785 to 807 (YECDECGKAYISHSSLINHKSVH), 813 to 834 (YNCECGKSFNYRSVLDQHKRIH), and 840 to 862 (YRCNECGKAFNIRSNLTKHKRTH). K748 participates in a covalent cross-link: Glycyl lysine isopeptide (Lys-Gly) (interchain with G-Cter in SUMO2). A Glycyl lysine isopeptide (Lys-Gly) (interchain with G-Cter in SUMO2) cross-link involves residue K882.

The protein belongs to the krueppel C2H2-type zinc-finger protein family.

Its subcellular location is the nucleus. Its function is as follows. May play a role in differentiating skeletal muscle. This chain is Zinc finger protein 62 homolog (ZFP62), found in Homo sapiens (Human).